A 5381-amino-acid chain; its full sequence is Protein purity of essence (5381 aa).

6 disordered regions span residues 140 to 174, 339 to 364, 599 to 621, 683 to 709, 1162 to 1212, and 1632 to 1659; these read KHPESSNKSIMSMAGSTTGGAGAGGSNDKESPKLE, QQQTAAAASTSQGSGGGLSSVQTSKD, SPETHDDNANTSSQERSGEQKSA, RNDSEQQSPPSTAAAVAAATGAGSSGS, SGGD…STET, and QAAQPNPSEESSQACDHSEGGEQRQSER. Positions 339–350 are enriched in low complexity; it reads QQQTAAAASTSQ. 2 stretches are compositionally biased toward low complexity: residues 690–709 and 1167–1176; these read SPPSTAAAVAAATGAGSSGS and SSCTSAASSS. Residues 1632–1646 show a composition bias toward polar residues; that stretch reads QAAQPNPSEESSQAC. A compositionally biased stretch (basic and acidic residues) spans 1647–1658; that stretch reads DHSEGGEQRQSE. The UBR-type zinc-finger motif lies at 1815 to 1884; the sequence is KLCTFSQTQK…EDGSCQALSR (70 aa). Disordered stretches follow at residues 1917 to 1939, 2443 to 2479, 2632 to 2652, 3037 to 3143, 3537 to 3562, and 4247 to 4280; these read KRSNTAPGATQQQHGAPARKDSI, KNTTNNPQGKSKGGGSAAAGKLLHRKASSQQHQKQLT, PDDSEDVPAPSSGPTPVTATQ, VSAG…DNNE, KQQQQQQQPPPAVVSASSKLRSDREK, and HHQQDAPAGTKPKSSKQQQSAGTETPPRKSKEAA. Polar residues-rich tracts occupy residues 1920 to 1930, 2470 to 2479, 2643 to 2652, and 3048 to 3058; these read NTAPGATQQQH, SSQQHQKQLT, SGPTPVTATQ, and NVATDGSTLRT. The segment covering 3065-3075 has biased composition (gly residues); that stretch reads GSGGSESGGSG. Residues 3084 to 3104 are compositionally biased toward polar residues; it reads ARSSNFGDHPNTTPPRQSCSS. Over residues 3119-3132 the composition is skewed to gly residues; the sequence is SGSGGSASVPGGGL. Residues 4904–5374 are UBR4 E3 catalytic module; sequence PSLKYILRFL…SFIEDLLASL (471 aa). The HemiRING-type zinc-finger motif lies at 5022–5136; the sequence is GLTCFICREG…SSYMQESTQR (115 aa). Zn(2+)-binding residues include cysteine 5025, cysteine 5028, histidine 5074, and cysteine 5077. The region spanning 5139–5374 is the UZI domain; the sequence is ISYTSSIHDL…SFIEDLLASL (236 aa).

It belongs to the UBR4 family.

Has a role in growth of the perineurial glial layer of the larval peripheral nerve. May have a role in male fertility and eye development or function. May bind calmodulin. This is Protein purity of essence from Drosophila pseudoobscura pseudoobscura (Fruit fly).